The sequence spans 210 residues: FMN-dependent NADH:quinone oxidoreductase (210 aa).

FMN contacts are provided by residues S10 and 16–18 (SRS).

This sequence belongs to the azoreductase type 1 family. As to quaternary structure, homodimer. It depends on FMN as a cofactor.

The catalysed reaction is 2 a quinone + NADH + H(+) = 2 a 1,4-benzosemiquinone + NAD(+). The enzyme catalyses N,N-dimethyl-1,4-phenylenediamine + anthranilate + 2 NAD(+) = 2-(4-dimethylaminophenyl)diazenylbenzoate + 2 NADH + 2 H(+). Its function is as follows. Quinone reductase that provides resistance to thiol-specific stress caused by electrophilic quinones. In terms of biological role, also exhibits azoreductase activity. Catalyzes the reductive cleavage of the azo bond in aromatic azo compounds to the corresponding amines. The polypeptide is FMN-dependent NADH:quinone oxidoreductase (Kineococcus radiotolerans (strain ATCC BAA-149 / DSM 14245 / SRS30216)).